Consider the following 21-residue polypeptide: GMASKAGSIVGKIAKIALGAL.

Leucine 21 is modified (leucine amide).

In terms of tissue distribution, expressed by the skin glands.

The protein resides in the secreted. Functionally, has antimicrobial activity against Gram-negative bacterium E.coli ATCC 25922 (MIC=25 uM), Gram-positive bacterium S.auerus ATCC 25923 (MIC=50 uM) and against fungus C.albicans ATCC 90028 (MIC=25 uM). Has some hemolytic activity against human erythrocytes at high concentration. The polypeptide is Peptide PGLa-B2 (Xenopus borealis (Kenyan clawed frog)).